The chain runs to 245 residues: Gem-associated protein 2 (245 aa).

It belongs to the gemin-2 family. In terms of assembly, component of the core survival motor neuron (SMN) complex composed of Smn, Gem2, Gem3, rig/Gem5 and one of 3 almost identical Gem4 paralogs encoded by Glos/Gem4a, Gem4b or Gem4c. Part of a minimal SMN complex composed of Smn and Gem2 only; this complex is active in UsnRNP assembly. The SMN complex associates with the entire set of spliceosomal snRNP Sm proteins, SmB, SmD1, SmD2, SmD3, SmE, SmF and SmG, and with the snRNP-specific proteins snRNP-U1-70K, U2A, snf/U1A and U5-116KD. Expressed in nurse cells and oocytes.

It is found in the cytoplasm. The protein resides in the U-body. Component of the survival motor neuron (SMN) complex that catalyzes the assembly of small nuclear ribonucleoproteins (snRNPs), the building blocks of the spliceosome, and thereby plays an important role in the splicing of cellular pre-mRNAs. Most spliceosomal snRNPs contain a common set of Sm proteins SNRPB, SNRPD1, SNRPD2, SNRPD3, SNRPE, SNRPF and SNRPG that assemble in a heptameric protein ring on the Sm site of the small nuclear RNA to form the core snRNP (Sm core). In the cytosol, the Sm proteins SNRPD1, SNRPD2, SNRPE, SNRPF and SNRPG (5Sm) are trapped in an inactive 6S pICln-Sm complex by the chaperone CLNS1A that controls the assembly of the core snRNP. To assemble core snRNPs, the SMN complex accepts the trapped 5Sm proteins from CLNS1A. Binding of snRNA inside 5Sm ultimately triggers eviction of the SMN complex, thereby allowing binding of SNRPD3 and SNRPB to complete assembly of the core snRNP. Within the SMN complex, GEMIN2 constrains the conformation of 5Sm, thereby promoting 5Sm binding to snRNA containing the snRNP code (a nonameric Sm site and a 3'-adjacent stem-loop), thus preventing progression of assembly until a cognate substrate is bound. Involved in adult motor function. The chain is Gem-associated protein 2 from Drosophila melanogaster (Fruit fly).